Consider the following 65-residue polypeptide: MVSVQINDNESIDKMLKRFKKKYERAGVLKEFRANAYFVKPSVDGRLKRSRSRRRAQRANEERNS.

The interval 45–65 is disordered; it reads GRLKRSRSRRRAQRANEERNS. A compositionally biased stretch (basic residues) spans 48–57; it reads KRSRSRRRAQ.

The protein belongs to the bacterial ribosomal protein bS21 family.

The polypeptide is Small ribosomal subunit protein bS21 (Pelodictyon phaeoclathratiforme (strain DSM 5477 / BU-1)).